The sequence spans 238 residues: Purine nucleoside phosphorylase DeoD-type (238 aa).

Residue histidine 4 coordinates a purine D-ribonucleoside. Phosphate-binding positions include glycine 20, arginine 24, arginine 43, and 87–90; that span reads RVGS. A purine D-ribonucleoside is bound by residues 179 to 181 and 203 to 204; these read EME and SD. The Proton donor role is filled by aspartate 204.

Belongs to the PNP/UDP phosphorylase family. In terms of assembly, homohexamer; trimer of homodimers.

It catalyses the reaction a purine D-ribonucleoside + phosphate = a purine nucleobase + alpha-D-ribose 1-phosphate. It carries out the reaction a purine 2'-deoxy-D-ribonucleoside + phosphate = a purine nucleobase + 2-deoxy-alpha-D-ribose 1-phosphate. In terms of biological role, catalyzes the reversible phosphorolytic breakdown of the N-glycosidic bond in the beta-(deoxy)ribonucleoside molecules, with the formation of the corresponding free purine bases and pentose-1-phosphate. The polypeptide is Purine nucleoside phosphorylase DeoD-type (Haemophilus influenzae (strain PittEE)).